Reading from the N-terminus, the 246-residue chain is Uridylate kinase (246 aa).

13 to 16 (KLSG) contacts ATP. A UMP-binding site is contributed by Gly54. ATP contacts are provided by Gly55 and Arg59. UMP-binding positions include Asp74 and 135–142 (AGMPYFST). ATP contacts are provided by Asn163, Tyr169, and Asp172.

Belongs to the UMP kinase family. In terms of assembly, homohexamer.

The protein localises to the cytoplasm. It carries out the reaction UMP + ATP = UDP + ADP. It participates in pyrimidine metabolism; CTP biosynthesis via de novo pathway; UDP from UMP (UMPK route): step 1/1. Its activity is regulated as follows. Inhibited by UTP. In terms of biological role, catalyzes the reversible phosphorylation of UMP to UDP. This Bifidobacterium longum (strain NCC 2705) protein is Uridylate kinase.